We begin with the raw amino-acid sequence, 914 residues long: Translation initiation factor IF-2 (914 aa).

Disordered stretches follow at residues E246 to G271 and S293 to M313. Basic and acidic residues predominate over residues E249 to V266. Positions T411 to K581 constitute a tr-type G domain. Residues G420–T427 are G1. Residue G420–T427 participates in GTP binding. The tract at residues G445 to H449 is G2. A G3 region spans residues D467 to G470. GTP-binding positions include D467–H471 and N521–D524. Positions N521–D524 are G4. The tract at residues S557–K559 is G5.

This sequence belongs to the TRAFAC class translation factor GTPase superfamily. Classic translation factor GTPase family. IF-2 subfamily.

Its subcellular location is the cytoplasm. In terms of biological role, one of the essential components for the initiation of protein synthesis. Protects formylmethionyl-tRNA from spontaneous hydrolysis and promotes its binding to the 30S ribosomal subunits. Also involved in the hydrolysis of GTP during the formation of the 70S ribosomal complex. The sequence is that of Translation initiation factor IF-2 from Chlorobaculum tepidum (strain ATCC 49652 / DSM 12025 / NBRC 103806 / TLS) (Chlorobium tepidum).